Here is a 353-residue protein sequence, read N- to C-terminus: MTDEPLGSHVLELQVAEVVEETSDARSLVFTVPEGAEIAADRLRYSPGQFLTLRVPSDRTGSVARCYSLSSSPTTDDRLTVTVKRTADGYASNWLCDNAHAGMRIHVLAPSGTFVPKDLDTDFLLLAAGSGITPMMAICKSALAEGTGNVVLIYANRDENSVIFAGALRELAAKYPDRLTVVHWLETVQGLPTAAGLGALAKPFAGREAFICGPGPFMTAAEDALRAAGTPDDHIHIEVFKSLESDPFAAVVIPEDDGDDQGPATAVVTLDGTTHEIRWPRSAKLLDVLLDKGLDAPFSCREGHCGACAVLKKSGEVHMEINDVLEPSDLEEGLILGCQATPVSDSVEVTYDE.

One can recognise an FAD-binding FR-type domain in the interval 8-117 (SHVLELQVAE…LAPSGTFVPK (110 aa)). One can recognise a 2Fe-2S ferredoxin-type domain in the interval 264 to 353 (ATAVVTLDGT…SDSVEVTYDE (90 aa)). Residues cysteine 300, cysteine 305, cysteine 308, and cysteine 338 each contribute to the [2Fe-2S] cluster site.

As to quaternary structure, monomer. The two-component system 3-ketosteroid-9-alpha-monooxygenase is composed of an oxygenase component KshA and a reductase component KshB. FAD is required as a cofactor. The cofactor is [2Fe-2S] cluster.

It carries out the reaction androsta-1,4-diene-3,17-dione + 2 reduced [2Fe-2S]-[ferredoxin] + O2 + 2 H(+) = 9alpha-hydroxyandrosta-1,4-diene-3,17-dione + 2 oxidized [2Fe-2S]-[ferredoxin] + H2O. The protein operates within lipid metabolism; steroid biosynthesis. Involved in the degradation of cholesterol. Catalyzes the introduction of a 9a-hydroxyl moiety into 1,4-androstadiene-3,17-dione (ADD) to yield the 9alpha-hydroxy-1,4-androstadiene-3,17-dione (9OHADD) intermediate which spontaneously form 3-hydroxy-9,10-seconandrost-1,3,5(10)-triene-9,17-dione (HSA) via the meta-cleavage of ring B with concomitant aromatization of ring A. In Mycolicibacterium smegmatis (strain ATCC 700084 / mc(2)155) (Mycobacterium smegmatis), this protein is 3-ketosteroid-9-alpha-monooxygenase, ferredoxin reductase component (kshB).